Here is a 352-residue protein sequence, read N- to C-terminus: Quinolinate synthase (352 aa).

Iminosuccinate contacts are provided by histidine 48 and serine 69. A [4Fe-4S] cluster-binding site is contributed by cysteine 114. Residues 140-142 and serine 157 each bind iminosuccinate; that span reads YAN. Cysteine 201 provides a ligand contact to [4Fe-4S] cluster. Iminosuccinate contacts are provided by residues 227-229 and threonine 244; that span reads HPE. Residue cysteine 298 coordinates [4Fe-4S] cluster.

It belongs to the quinolinate synthase family. Type 1 subfamily. [4Fe-4S] cluster is required as a cofactor.

The protein localises to the cytoplasm. It carries out the reaction iminosuccinate + dihydroxyacetone phosphate = quinolinate + phosphate + 2 H2O + H(+). It functions in the pathway cofactor biosynthesis; NAD(+) biosynthesis; quinolinate from iminoaspartate: step 1/1. Catalyzes the condensation of iminoaspartate with dihydroxyacetone phosphate to form quinolinate. The protein is Quinolinate synthase of Ectopseudomonas mendocina (strain ymp) (Pseudomonas mendocina).